The sequence spans 250 residues: 3-deoxy-manno-octulosonate cytidylyltransferase (250 aa).

This sequence belongs to the KdsB family.

Its subcellular location is the cytoplasm. The catalysed reaction is 3-deoxy-alpha-D-manno-oct-2-ulosonate + CTP = CMP-3-deoxy-beta-D-manno-octulosonate + diphosphate. Its pathway is nucleotide-sugar biosynthesis; CMP-3-deoxy-D-manno-octulosonate biosynthesis; CMP-3-deoxy-D-manno-octulosonate from 3-deoxy-D-manno-octulosonate and CTP: step 1/1. It functions in the pathway bacterial outer membrane biogenesis; lipopolysaccharide biosynthesis. In terms of biological role, activates KDO (a required 8-carbon sugar) for incorporation into bacterial lipopolysaccharide in Gram-negative bacteria. This chain is 3-deoxy-manno-octulosonate cytidylyltransferase, found in Thioalkalivibrio sulfidiphilus (strain HL-EbGR7).